The primary structure comprises 131 residues: Glycine cleavage system H protein (131 aa).

The Lipoyl-binding domain occupies 24–106 (TVRIGITDYA…YGEGWLVDLE (83 aa)). Position 65 is an N6-lipoyllysine (Lys-65).

The protein belongs to the GcvH family. In terms of assembly, the glycine cleavage system is composed of four proteins: P, T, L and H. (R)-lipoate is required as a cofactor.

Its function is as follows. The glycine cleavage system catalyzes the degradation of glycine. The H protein shuttles the methylamine group of glycine from the P protein to the T protein. The chain is Glycine cleavage system H protein from Mycobacteroides abscessus (strain ATCC 19977 / DSM 44196 / CCUG 20993 / CIP 104536 / JCM 13569 / NCTC 13031 / TMC 1543 / L948) (Mycobacterium abscessus).